The sequence spans 462 residues: G-patch domain and KOW motifs-containing protein homolog 1 (462 aa).

Disordered regions lie at residues 1–26 and 182–218; these read MVEQ…KREE and LKLP…EEEK. The G-patch domain occupies 154–202; sequence IESFGLAILRGCNWKDGDGIGKNPQKVALKLPNRRPPGLGLGATPKNPV. Positions 221–248 constitute a KOW 1 domain; it reads EIKVGSFIKVVDGRNKGVYGKVEGRDDD. Positions 289–305 are enriched in basic and acidic residues; the sequence is EYDKEKDRLETERKKLE. The disordered stretch occupies residues 289–337; the sequence is EYDKEKDRLETERKKLESQPPSTSTSQSSKDYKSKSSSSKHDKNSSEYE. Positions 306–317 are enriched in low complexity; the sequence is SQPPSTSTSQSS. Residues 318–337 are compositionally biased toward basic and acidic residues; that stretch reads KDYKSKSSSSKHDKNSSEYE. Residues 401–428 form the KOW 2 domain; the sequence is PREIGEKLMIVAGKRSGQLAVMLDKDKR.

This sequence belongs to the MOS2 family.

The protein localises to the nucleus. This is G-patch domain and KOW motifs-containing protein homolog 1 from Caenorhabditis elegans.